The chain runs to 1354 residues: Rho-associated protein kinase 1 (1354 aa).

Ser2 is subject to N-acetylserine. The Protein kinase domain occupies 76-338 (YEVVKVIGRG…VEEIKRHLFF (263 aa)). Residues 82-90 (IGRGAFGEV) and Lys105 contribute to the ATP site. The Proton acceptor role is filled by Asp198. The 69-residue stretch at 341-409 (DQWAWETLRD…YSNRRYLSPA (69 aa)) folds into the AGC-kinase C-terminal domain. The interaction with FHOD1 stretch occupies residues 368–727 (FDDLEEDKGD…KKLKEEREAR (360 aa)). The stretch at 422-692 (KSLQENLQKT…RLEQEVNEHK (271 aa)) forms a coiled coil. One can recognise an REM-1 domain in the interval 479-556 (STVSQIEKEK…LEEANDLLRT (78 aa)). An SHROOM3 binding region spans residues 707 to 946 (EAKSVAMCEM…AVSRLEETNS (240 aa)). Residues 949 to 1015 (TKDIELLRKE…LAEIMNRKDF (67 aa)) form the RhoBD domain. The tract at residues 998–1010 (LKTQAVNKLAEIM) is RHOA binding. The stretch at 1011–1102 (NRKDFKIDKK…KLSDLSDSTS (92 aa)) forms a coiled coil. Residues 1101 to 1120 (TSVASFPSADETDPNLPESR) form a disordered region. 2 positions are modified to phosphoserine: Ser1105 and Ser1108. The auto-inhibitory stretch occupies residues 1115–1354 (NLPESRIEGW…VVKNTSGKTS (240 aa)). In terms of domain architecture, PH spans 1118–1317 (ESRIEGWLSV…WVTHLVKKIP (200 aa)). The segment at 1228-1283 (GHEFIPTLYHFPANCEACAKPLWHVFKPPPALECRRCHVKCHRDHLDKKEDLISPC) adopts a Phorbol-ester/DAG-type zinc-finger fold. Ser1328 carries the post-translational modification Phosphoserine. Residues 1333 to 1354 (STRSTANQSFRKVVKNTSGKTS) form a disordered region.

The protein belongs to the protein kinase superfamily. AGC Ser/Thr protein kinase family. In terms of assembly, homodimer. Interacts with RHOA (activated by GTP), RHOB, RHOC, GEM, MYLC2B, RHOE, PPP1R12A, LIMK1, LIMK2, TSG101, CHORDC1, DAPK3, PFN1, PTEN and JIP3. Interacts with FHOD1 in a Src-dependent manner. Interacts with ITGB1BP1 (via N-terminus and PTB domain). Interacts with SHROOM3. Requires Mg(2+) as cofactor. Autophosphorylated on serine and threonine residues. In terms of processing, cleaved by caspase-3 during apoptosis. This leads to constitutive activation of the kinase and membrane blebbing. As to expression, detected in corneal epithelium.

The protein localises to the cytoplasm. It localises to the cytoskeleton. The protein resides in the microtubule organizing center. It is found in the centrosome. Its subcellular location is the centriole. The protein localises to the golgi apparatus membrane. It localises to the cell projection. The protein resides in the bleb. It is found in the cell membrane. Its subcellular location is the lamellipodium. The protein localises to the ruffle. It catalyses the reaction L-seryl-[protein] + ATP = O-phospho-L-seryl-[protein] + ADP + H(+). It carries out the reaction L-threonyl-[protein] + ATP = O-phospho-L-threonyl-[protein] + ADP + H(+). With respect to regulation, activated by RHOA binding. Inhibited by Y-27632. Functionally, protein kinase which is a key regulator of the actin cytoskeleton and cell polarity. Involved in regulation of smooth muscle contraction, actin cytoskeleton organization, stress fiber and focal adhesion formation, neurite retraction, cell adhesion and motility via phosphorylation of DAPK3, GFAP, LIMK1, LIMK2, MYL9/MLC2, TPPP, PFN1 and PPP1R12A. Phosphorylates FHOD1 and acts synergistically with it to promote SRC-dependent non-apoptotic plasma membrane blebbing. Phosphorylates JIP3 and regulates the recruitment of JNK to JIP3 upon UVB-induced stress. Acts as a suppressor of inflammatory cell migration by regulating PTEN phosphorylation and stability. Acts as a negative regulator of VEGF-induced angiogenic endothelial cell activation. Required for centrosome positioning and centrosome-dependent exit from mitosis. Plays a role in terminal erythroid differentiation. Inhibits podocyte motility via regulation of actin cytoskeletal dynamics and phosphorylation of CFL1. Promotes keratinocyte terminal differentiation. Involved in osteoblast compaction through the fibronectin fibrillogenesis cell-mediated matrix assembly process, essential for osteoblast mineralization. May regulate closure of the eyelids and ventral body wall by inducing the assembly of actomyosin bundles. The chain is Rho-associated protein kinase 1 (ROCK1) from Oryctolagus cuniculus (Rabbit).